Reading from the N-terminus, the 82-residue chain is Defensin-like protein 7 (82 aa).

Positions M1 to G29 are cleaved as a signal peptide. Q30 carries the post-translational modification Pyrrolidone carboxylic acid. Cystine bridges form between C33–C77, C44–C64, C50–C71, and C54–C73.

This sequence belongs to the DEFL family. In terms of tissue distribution, expressed in stems, roots, rosette leaves and flower buds.

Its subcellular location is the secreted. The polypeptide is Defensin-like protein 7 (LCR75) (Arabidopsis thaliana (Mouse-ear cress)).